We begin with the raw amino-acid sequence, 219 residues long: Swarming motility regulation protein RssB (219 aa).

The region spanning 2 to 116 (NILLVEDDLQ…ELISRVKAVN (115 aa)) is the Response regulatory domain. Aspartate 51 carries the 4-aspartylphosphate modification. Residues 124 to 218 (SQTWSLGALY…VRGIGYLLKK (95 aa)) constitute a DNA-binding region (ompR/PhoB-type).

Its subcellular location is the cytoplasm. Its function is as follows. Member of the two-component regulatory system RssA/RssB involved in regulation of swarming motility which has been shown to be inhibited by saturated fatty acids. RssA/RssB regulates cellular fatty acid composition, hemolysin production and cell surface topography. RssA/RssB negatively regulates the activity of SlhBA. It can also act as a negative regulator for the control of the swarming initiation. RssB binds its own promoter. The protein is Swarming motility regulation protein RssB (rssB) of Serratia marcescens.